The primary structure comprises 187 residues: MVRPLNCIVAVSQNMGIGKNGDFPWPMLRNEFKYFQRMTTTSSVEGKQNLVIMGRKTWFSIPEKNRPLKDRINIVLSRELKEPPQGAHFLAKSLDDALKLIEQPELADKVDMVWIVGGSSVYKEAMNQPGHLRLFVTRIMQEFESDTFFPEIDLEKYKLLPEYPGVLSEVQEEKGIKYKFEVYEKKG.

One can recognise a DHFR domain in the interval 4-185; that stretch reads PLNCIVAVSQ…IKYKFEVYEK (182 aa). The interval 8-37 is involved in methotrexate binding; that stretch reads IVAVSQNMGIGKNGDFPWPMLRNEFKYFQR. NADP(+)-binding positions include alanine 10 and 16-22; that span reads GIGKNGD. 31 to 36 serves as a coordination point for substrate; the sequence is EFKYFQ. An N6-acetyllysine; alternate modification is found at lysine 33. Residue lysine 33 is modified to N6-succinyllysine; alternate. 55–57 provides a ligand contact to NADP(+); sequence RKT. Residues 60-70 form an involved in methotrexate binding region; the sequence is SIPEKNRPLKD. A substrate-binding site is contributed by arginine 71. NADP(+) contacts are provided by residues 77–79 and 117–124; these read SRE and GGSSVYKE. Threonine 137 is a binding site for methotrexate.

It belongs to the dihydrofolate reductase family. As to quaternary structure, homodimer.

The protein resides in the mitochondrion. It localises to the cytoplasm. The catalysed reaction is (6S)-5,6,7,8-tetrahydrofolate + NADP(+) = 7,8-dihydrofolate + NADPH + H(+). It functions in the pathway cofactor biosynthesis; tetrahydrofolate biosynthesis; 5,6,7,8-tetrahydrofolate from 7,8-dihydrofolate: step 1/1. Its function is as follows. Key enzyme in folate metabolism. Contributes to the de novo mitochondrial thymidylate biosynthesis pathway. Catalyzes an essential reaction for de novo glycine and purine synthesis, and for DNA precursor synthesis. Binds its own mRNA. This chain is Dihydrofolate reductase (DHFR), found in Mesocricetus auratus (Golden hamster).